Consider the following 406-residue polypeptide: MDLFPVLKELAQKTPSKILLIVLDGVGGLPLEPGGPTELEAAKTPNLDRLAEESALGLLTPVYPGLAPGSGPGHLALFGYDPFRYVVGRGALSALGLGADFREGDVALRGNFATLDPEGKVVDRRAGRPPTEENQRVVAKLKEAIPRIEDVEVHFYTESEHRFLVVLRGEGLGDAVTDTDPQKTGLPPLKAKALDEASERTARLVNLLSERIREVLKDEPRMNGALFRGASKKPSFPRMQEVYKLTPAAIASYPMYKGLASLVGMEVLPVEGEGDALEGKLKALKENWGRYDFFYFHVKKTDAMGEDGNFHGKVEKVELFDALLPEILALGPDVLAITGDHSTPALLKAHSWHPVPLLLKAPYLRADEARRFTEREAQRGSLGHLRGMELMPLLLAHAGKLLKYGA.

This sequence belongs to the BPG-independent phosphoglycerate mutase family. A-PGAM subfamily.

It catalyses the reaction (2R)-2-phosphoglycerate = (2R)-3-phosphoglycerate. The protein operates within carbohydrate degradation; glycolysis; pyruvate from D-glyceraldehyde 3-phosphate: step 3/5. Functionally, catalyzes the interconversion of 2-phosphoglycerate and 3-phosphoglycerate. This is Probable 2,3-bisphosphoglycerate-independent phosphoglycerate mutase from Thermus thermophilus (strain ATCC BAA-163 / DSM 7039 / HB27).